Here is a 144-residue protein sequence, read N- to C-terminus: Methylglyoxal synthase (144 aa).

One can recognise an MGS-like domain in the interval 1–144; sequence MKIALIAHDE…KSGEEKETER (144 aa). Residues His-8, Lys-12, 34 to 37, and 54 to 55 each bind substrate; these read TGTT and SG. Residue Asp-60 is the Proton donor/acceptor of the active site. His-87 contributes to the substrate binding site.

The protein belongs to the methylglyoxal synthase family.

The enzyme catalyses dihydroxyacetone phosphate = methylglyoxal + phosphate. Catalyzes the formation of methylglyoxal from dihydroxyacetone phosphate. The protein is Methylglyoxal synthase of Geobacillus thermodenitrificans (strain NG80-2).